A 626-amino-acid chain; its full sequence is MIFLTALPLFWIMISASRGGHWGAWMPSSISAFEGTCVSIPCRFDFPDELRPAVVHGVWYFNSPYPKNYPPVVFKSRTQVVHESFQGRSRLLGDLGLRNCTLLLSNVSPELGGKYYFRGDLGGYNQYTFSEHSVLDIVNTPNIVVPPEVVAGTEVEVSCMVPDNCPELRPELSWLGHEGLGEPAVLGRLREDEGTWVQVSLLHFVPTREANGHRLGCQASFPNTTLQFEGYASMDVKYPPVIVEMNSSVEAIEGSHVSLLCGADSNPPPLLTWMRDGTVLREAVAESLLLELEEVTPAEDGVYACLAENAYGQDNRTVGLSVMYAPWKPTVNGTMVAVEGETVSILCSTQSNPDPILTIFKEKQILSTVIYESELQLELPAVSPEDDGEYWCVAENQYGQRATAFNLSVEFAPVLLLESHCAAARDTVQCLCVVKSNPEPSVAFELPSRNVTVNESEREFVYSERSGLVLTSILTLRGQAQAPPRVICTARNLYGAKSLELPFQGAHRLMWAKIGPVGAVVAFAILIAIVCYITQTRRKKNVTESPSFSAGDNPPVLFSSDFRISGAPEKYESERRLGSERRLLGLRGEPPELDLSYSHSDLGKRPTKDSYTLTEELAEYAEIRVK.

The first 19 residues, methionine 1–glycine 19, serve as a signal peptide directing secretion. The tract at residues glycine 20–alanine 325 is interaction with RTN4R and RTN4RL2. Residues glycine 20–proline 516 lie on the Extracellular side of the membrane. The Ig-like V-type domain occupies tryptophan 22–aspartate 120. 3 disulfide bridges follow: cysteine 37–cysteine 165, cysteine 42–cysteine 100, and cysteine 159–cysteine 217. Tyrosine 65–lysine 67 contributes to the a ganglioside GT1b (d18:1(4E)) binding site. Residue asparagine 99 is glycosylated (N-linked (GlcNAc...) asparagine). N-linked (GlcNAc...) asparagine; partial glycosylation occurs at asparagine 106. A ganglioside GT1b (d18:1(4E))-binding positions include arginine 118 and tyrosine 124 to threonine 128. 4 consecutive Ig-like C2-type domains span residues asparagine 139–lysine 237, valine 241–alanine 325, tryptophan 327–alanine 412, and proline 413–arginine 508. Asparagine 223 and asparagine 246 each carry an N-linked (GlcNAc...) asparagine glycan. An intrachain disulfide couples cysteine 261 to cysteine 305. Asparagine 315 carries N-linked (GlcNAc...) asparagine glycosylation. A disulfide bridge links cysteine 347 with cysteine 392. The N-linked (GlcNAc...) asparagine glycan is linked to asparagine 406. Disulfide bonds link cysteine 421–cysteine 430 and cysteine 432–cysteine 488. Asparagine 450 and asparagine 454 each carry an N-linked (GlcNAc...) asparagine glycan. Residues valine 517–threonine 536 form a helical membrane-spanning segment. A lipid anchor (S-palmitoyl cysteine) is attached at cysteine 531. The Cytoplasmic portion of the chain corresponds to arginine 537–lysine 626. Serine 545, serine 547, and serine 549 each carry phosphoserine. The required for normal axon myelination in the central nervous system stretch occupies residues leucine 577–lysine 626. The interval arginine 582–lysine 608 is disordered.

This sequence belongs to the immunoglobulin superfamily. SIGLEC (sialic acid binding Ig-like lectin) family. As to quaternary structure, monomer and homodimer. Interacts (via the first three N-terminal Ig-like domains) with RTN4R and RTN4RL2. Interacts with RTN4R. Interacts with isoform 2 of BSG. Post-translationally, N-glycosylated. Phosphorylated on tyrosine residues. In terms of processing, ubiquitinated, leading to proteasomal degradation. In terms of tissue distribution, both isoform 1 and isoform 2 are detected in myelinated structures in the central and peripheral nervous system, in periaxonal myelin and at Schmidt-Lanterman incisures. Detected in optic nerve, in oligodendroglia and in periaxonal myelin sheaths. Detected in compact myelin (at protein level). Both isoform 1 and isoform 2 are detected in the central and peripheral nervous system.

The protein resides in the cell membrane. It localises to the membrane raft. Adhesion molecule that mediates interactions between myelinating cells and neurons by binding to neuronal sialic acid-containing gangliosides and to the glycoproteins RTN4R and RTN4RL2. Not required for initial myelination, but seems to play a role in the maintenance of normal axon myelination. Protects motoneurons against apoptosis, also after injury; protection against apoptosis is probably mediated via interaction with neuronal RTN4R and RTN4RL2. Required to prevent degeneration of myelinated axons in adults; this probably depends on binding to gangliosides on the axon cell membrane. Negative regulator of neurite outgrowth; in dorsal root ganglion neurons the inhibition is mediated primarily via binding to neuronal RTN4R or RTN4RL2 and to a lesser degree via binding to neuronal gangliosides. In cerebellar granule cells the inhibition is mediated primarily via binding to neuronal gangliosides. In sensory neurons, inhibition of neurite extension depends only partially on RTN4R, RTN4RL2 and gangliosides. Inhibits axon longitudinal growth. Inhibits axon outgrowth by binding to RTN4R. Preferentially binds to alpha-2,3-linked sialic acid. Binds ganglioside Gt1b. The protein is Myelin-associated glycoprotein (MAG) of Homo sapiens (Human).